The primary structure comprises 235 residues: Putative N-acetylmannosamine-6-phosphate 2-epimerase (235 aa).

It belongs to the NanE family.

The catalysed reaction is an N-acyl-D-glucosamine 6-phosphate = an N-acyl-D-mannosamine 6-phosphate. It participates in amino-sugar metabolism; N-acetylneuraminate degradation; D-fructose 6-phosphate from N-acetylneuraminate: step 3/5. Functionally, converts N-acetylmannosamine-6-phosphate (ManNAc-6-P) to N-acetylglucosamine-6-phosphate (GlcNAc-6-P). The chain is Putative N-acetylmannosamine-6-phosphate 2-epimerase from Aliivibrio fischeri (strain ATCC 700601 / ES114) (Vibrio fischeri).